The following is a 119-amino-acid chain: Large ribosomal subunit protein eL31 (119 aa).

Belongs to the eukaryotic ribosomal protein eL31 family.

This is Large ribosomal subunit protein eL31 (RPL31) from Cyanophora paradoxa.